The chain runs to 232 residues: 5'-methylthioadenosine/S-adenosylhomocysteine nucleosidase (232 aa).

Glu12 serves as the catalytic Proton acceptor. Residues Gly78, Ile152, and Met173–Glu174 contribute to the substrate site. Asp197 (proton donor) is an active-site residue.

The protein belongs to the PNP/UDP phosphorylase family. MtnN subfamily. In terms of assembly, homodimer.

The enzyme catalyses S-adenosyl-L-homocysteine + H2O = S-(5-deoxy-D-ribos-5-yl)-L-homocysteine + adenine. It carries out the reaction S-methyl-5'-thioadenosine + H2O = 5-(methylsulfanyl)-D-ribose + adenine. The catalysed reaction is 5'-deoxyadenosine + H2O = 5-deoxy-D-ribose + adenine. Its pathway is amino-acid biosynthesis; L-methionine biosynthesis via salvage pathway; S-methyl-5-thio-alpha-D-ribose 1-phosphate from S-methyl-5'-thioadenosine (hydrolase route): step 1/2. Its function is as follows. Catalyzes the irreversible cleavage of the glycosidic bond in both 5'-methylthioadenosine (MTA) and S-adenosylhomocysteine (SAH/AdoHcy) to adenine and the corresponding thioribose, 5'-methylthioribose and S-ribosylhomocysteine, respectively. Also cleaves 5'-deoxyadenosine, a toxic by-product of radical S-adenosylmethionine (SAM) enzymes, into 5-deoxyribose and adenine. Thus, is required for in vivo function of the radical SAM enzymes biotin synthase and lipoic acid synthase, that are inhibited by 5'-deoxyadenosine accumulation. The sequence is that of 5'-methylthioadenosine/S-adenosylhomocysteine nucleosidase from Shigella boydii serotype 4 (strain Sb227).